A 292-amino-acid polypeptide reads, in one-letter code: ATP synthase gamma chain (292 aa).

Belongs to the ATPase gamma chain family. F-type ATPases have 2 components, CF(1) - the catalytic core - and CF(0) - the membrane proton channel. CF(1) has five subunits: alpha(3), beta(3), gamma(1), delta(1), epsilon(1). CF(0) has three main subunits: a, b and c.

Its subcellular location is the cell inner membrane. Its function is as follows. Produces ATP from ADP in the presence of a proton gradient across the membrane. The gamma chain is believed to be important in regulating ATPase activity and the flow of protons through the CF(0) complex. The polypeptide is ATP synthase gamma chain (Brucella ovis (strain ATCC 25840 / 63/290 / NCTC 10512)).